Consider the following 425-residue polypeptide: MALPYLEAVLCFMILMYIFETYLDIRQHRALKLPTLPKPLVGVISGEKFERSRAYSLDKSKFHFIHEAVTILMDTTILYYRVLPWVWKKSGELATNAGLNAENEILHTLAFLAGVMIWSQITDLPFSLYSTFVIEAKHGFNKQTIWLFIRDMIKGILLSILLGPPIVAAIIIIVQNGGPYLAIYLWGFMFALSLVMMTIYPIVIAPLFNKFTPLPEGVLREKIEKLAASLSFPLKKLFVVDGSTRSSHSNAYMYGFFKNKRIVLYDTLIQQCSSEDEIVSVIAHELGHWKLNHTVYSFVAVQLLMFLQFGGYTLVRNSKDLFESFGFEDQPVIIGLIIFQHTIIPVQHLLSFCLNLVSRAFEFQADAFAKNLGYAPQLRAALVKLQEENLSAMNTDPWYSAYHYSHPPLVERLSALEDADSKKEN.

Helical transmembrane passes span 3-23 (LPYLEAVLCFMILMYIFETYL), 62-80 (FHFIHEAVTILMDTTILYY), 109-129 (LAFLAGVMIWSQITDLPFSLY), 155-175 (GILLSILLGPPIVAAIIIIVQ), and 188-208 (FMFALSLVMMTIYPIVIAPLF). Histidine 284 is a Zn(2+) binding site. The active site involves glutamate 285. Histidine 288 is a Zn(2+) binding site. The next 2 membrane-spanning stretches (helical) occupy residues 295–315 (VYSFVAVQLLMFLQFGGYTLV) and 332–352 (VIIGLIIFQHTIIPVQHLLSF). Position 362 (glutamate 362) interacts with Zn(2+). Residue aspartate 366 is the Proton donor of the active site.

Belongs to the peptidase M48A family. Zn(2+) is required as a cofactor.

It localises to the endoplasmic reticulum membrane. It catalyses the reaction Hydrolyzes the peptide bond -P2-(S-farnesyl or geranylgeranyl)C-P1'-P2'-P3'-COOH where P1' and P2' are amino acids with aliphatic side chains and P3' is any C-terminal residue.. In terms of biological role, proteolytically removes the C-terminal three residues of farnesylated proteins. This Oryza sativa subsp. japonica (Rice) protein is CAAX prenyl protease 1 homolog (FACE1).